The primary structure comprises 186 residues: MFDIGFSELILLMVLGLVVLGPKRLPIAIRTVMDWVKTIRGLAANVQNELKQELKLQELQDSIKKAESLNLQALSPELSKTVEELKAQADKMKAELEDKAAQAGTTVEDQIKEIKNAAENAEKPQNAISVEEAAETLSEAEKTPTDLTALETHEKVELNTHLSSYYPPDDIEIAPASKSQSSKTKS.

Residues 1-21 form a helical membrane-spanning segment; sequence MFDIGFSELILLMVLGLVVLG. Positions 162–186 are disordered; that stretch reads LSSYYPPDDIEIAPASKSQSSKTKS. A compositionally biased stretch (polar residues) spans 177 to 186; sequence SKSQSSKTKS.

This sequence belongs to the TatB family. As to quaternary structure, the Tat system comprises two distinct complexes: a TatABC complex, containing multiple copies of TatA, TatB and TatC subunits, and a separate TatA complex, containing only TatA subunits. Substrates initially bind to the TatABC complex, which probably triggers association of the separate TatA complex to form the active translocon.

It localises to the cell inner membrane. Part of the twin-arginine translocation (Tat) system that transports large folded proteins containing a characteristic twin-arginine motif in their signal peptide across membranes. Together with TatC, TatB is part of a receptor directly interacting with Tat signal peptides. TatB may form an oligomeric binding site that transiently accommodates folded Tat precursor proteins before their translocation. In Haemophilus influenzae (strain 86-028NP), this protein is Sec-independent protein translocase protein TatB.